The sequence spans 353 residues: Peroxisome assembly protein 12-A (353 aa).

Over 1 to 19 (MAERGAHITTTSASDDRPS) the chain is Peroxisomal matrix. A helical membrane pass occupies residues 20–47 (IFEVVAQESLMAAARPALHHIVKVLAES). At 48–51 (NPSR) the chain is on the cytoplasmic side. A helical membrane pass occupies residues 52-76 (YGTLWRWFDELYTLLDWLLQQHYLS). Residues 77–104 (WASASFSENFYGLKRITLGKEVGQRNLP) are Peroxisomal matrix-facing. The chain crosses the membrane as a helical span at residues 105–134 (RKEYWKSLLLLVLIPYLRVKLEKIVNRLRE). Residues 135 to 139 (EQDYS) lie on the Cytoplasmic side of the membrane. The chain crosses the membrane as a helical span at residues 140 to 178 (IQNPTSFHKRCYKAILASYPFVKLGWEAWFLFYQLRYIL). Over 179-243 (WNGKNHSPLL…LGAVALSVSS (65 aa)) the chain is Peroxisomal matrix. Residues 244 to 271 (SLSLGVFFLQFLDWWYSAENQETLKSLN) form a helical membrane-spanning segment. Residues 272-353 (NLPVPPPPIH…HLIKLYTPDG (82 aa)) lie on the Cytoplasmic side of the membrane. Residues cysteine 298, cysteine 301, cysteine 319, and cysteine 322 each contribute to the Zn(2+) site. An RING-type; degenerate zinc finger spans residues 298 to 337 (CPLCRKVRVNDTALGTSGYVFCYRCAYYYVKTHQRCPVSG).

This sequence belongs to the pex2/pex10/pex12 family. In terms of assembly, component of the PEX2-PEX10-PEX12 retrotranslocation channel.

It localises to the peroxisome membrane. It functions in the pathway protein modification; protein ubiquitination. Functionally, component of a retrotranslocation channel required for peroxisome organization by mediating export of the PEX5 receptor from peroxisomes to the cytosol, thereby promoting PEX5 recycling. The retrotranslocation channel is composed of PEX2, PEX10 and PEX12; each subunit contributing transmembrane segments that coassemble into an open channel that specifically allows the passage of PEX5 through the peroxisomal membrane. PEX12 also regulates PEX5 recycling by activating the E3 ubiquitin-protein ligase activity of PEX10. When PEX5 recycling is compromised, PEX12 stimulates PEX10-mediated polyubiquitination of PEX5, leading to its subsequent degradation. This Xenopus laevis (African clawed frog) protein is Peroxisome assembly protein 12-A.